The primary structure comprises 2898 residues: Pericentrin (2898 aa).

The disordered stretch occupies residues 1-117; it reads MEDEQEQRRR…QPPPPQTAHS (117 aa). Positions 34–44 are enriched in basic residues; that stretch reads SKKKTAKRKGS. Residue S44 is modified to Phosphoserine. Coiled-coil stretches lie at residues 127 to 343 and 382 to 434; these read LNNM…IRLL and AQQQ…DSLE. A disordered region spans residues 429–460; sequence REDSLESTEISSSCVLPEETSGREGKEPPDPL. Basic and acidic residues predominate over residues 448–457; it reads TSGREGKEPP. Coiled-coil stretches lie at residues 468 to 527, 611 to 696, 727 to 787, and 872 to 939; these read KVQE…LREK, CALQ…LETH, VADV…SLRM, and SQDQ…LRRL. A Phosphoserine modification is found at S1022. 3 coiled-coil regions span residues 1069 to 1383, 1429 to 1482, and 1529 to 1593; these read EREF…QENM, NEVV…SLMG, and QLLA…AKEA. S1437 is subject to Phosphoserine. Disordered stretches follow at residues 1745–1786, 1815–1880, and 1958–1979; these read VASR…DDVL, TQEK…PLTP, and TSPSHELARRSDGSRKSDGPDI. Polar residues-rich tracts occupy residues 1747–1766 and 1817–1834; these read SRDTNSETCKLQQPNLSENG and EKLTSQGGPFSSQASGHS. The segment at 1801–1822 is interaction with CDK5RAP2; sequence NQDLLVQVEMPDFPTQEKLTSQ. Residues S1828, S1859, S1860, and S1959 each carry the phosphoserine modification. Positions 1963–1976 are enriched in basic and acidic residues; it reads ELARRSDGSRKSDG. S1987 carries the post-translational modification Phosphoserine. The segment covering 2046–2055 has biased composition (polar residues); sequence SESQDPSSAL. The segment at 2046–2088 is disordered; sequence SESQDPSSALNKGEPRDPLDGFPRDSQALSEVTTDKGEKESLE. Basic and acidic residues-rich tracts occupy residues 2058 to 2068 and 2078 to 2088; these read GEPRDPLDGFP and TTDKGEKESLE. Position 2128 is a phosphoserine (S2128). 2 coiled-coil regions span residues 2211–2403 and 2429–2590; these read KVEQ…EALQ and HALL…ELSM. Disordered regions lie at residues 2509-2532 and 2653-2684; these read VSGGNGPCRGSPGRGSLERDQFQE and NRQSKSSLKQDGTDLQSSLRHSDPEWHSQTTS. The tract at residues 2545 to 2810 is interaction with NEK2; the sequence is LCAAGLLTSF…SQRQRSPSGP (266 aa). The segment covering 2653-2671 has biased composition (polar residues); sequence NRQSKSSLKQDGTDLQSSL. Positions 2758–2771 are calmodulin-binding; the sequence is KFRTAVRVVIAVLR. A disordered region spans residues 2787 to 2898; it reads ALVHPKSTRH…QKSCHQKIKQ (112 aa). The span at 2792–2802 shows a compositional bias: basic residues; that stretch reads KSTRHGHRTSQ. Residues 2845-2860 are compositionally biased toward polar residues; the sequence is TSTPSSRLERSLTASQ. The segment covering 2861–2874 has biased composition (basic and acidic residues); the sequence is DPEHSLTEYIHHLE. A Phosphoserine modification is found at S2865.

Interacts with DISC1 and PCM1. Binds calmodulin. Interacts with CEP131. Interacts with CDK5RAP2; the interaction is leading to centrosomal localization of PCNT and CDK5RAP2. Interacts with CHD3. Interacts with CHD4; the interaction regulates centrosome integrity. Interacts with NEK2. Interacts with CCDC13. Interacts with CEP68. Interacts with ATF5; the ATF5:PCNT:polyglutamylated tubulin (PGT) tripartite unites the mother centriole and the pericentriolar material (PCM) in the centrosome. In terms of processing, cleaved during mitotis which leads to removal of CDK5RAP2 from the centrosome and promotes centriole disengagement and subsequent centriole separation. The C-terminal fragment is rapidly degraded following cleavage. Ubiquitinated by TRIM43; leading to proteasomal degradation. In terms of tissue distribution, expressed in heart and lung (at protein level). Expressed in kidney, thymus, liver, brain, muscle, testis, spleen, lung and heart.

It is found in the cytoplasm. The protein localises to the cytoskeleton. Its subcellular location is the microtubule organizing center. The protein resides in the centrosome. Integral component of the filamentous matrix of the centrosome involved in the initial establishment of organized microtubule arrays in both mitosis and meiosis. Plays a role, together with DISC1, in the microtubule network formation. Is an integral component of the pericentriolar material (PCM). May play an important role in preventing premature centrosome splitting during interphase by inhibiting NEK2 kinase activity at the centrosome. The polypeptide is Pericentrin (Pcnt) (Mus musculus (Mouse)).